Reading from the N-terminus, the 238-residue chain is Ribonuclease PH (238 aa).

Residues R86 and 124–126 contribute to the phosphate site; that span reads GTR.

Belongs to the RNase PH family. Homohexameric ring arranged as a trimer of dimers.

It carries out the reaction tRNA(n+1) + phosphate = tRNA(n) + a ribonucleoside 5'-diphosphate. In terms of biological role, phosphorolytic 3'-5' exoribonuclease that plays an important role in tRNA 3'-end maturation. Removes nucleotide residues following the 3'-CCA terminus of tRNAs; can also add nucleotides to the ends of RNA molecules by using nucleoside diphosphates as substrates, but this may not be physiologically important. Probably plays a role in initiation of 16S rRNA degradation (leading to ribosome degradation) during starvation. This chain is Ribonuclease PH, found in Proteus mirabilis (strain HI4320).